The sequence spans 283 residues: MAQSTALTICGLVYSPAIGQELVRLHTSDIDELVYFSSEREFCNYLEARRNSVACLILEWGEGTPQIITYLHHSATLLPAILIFPAAPAPPPAGPHYHIAEVILTTDQLDQLNRQIEEAITGFVKLCPGCAVPPHVLFRLPALKESSNVDPQHRLSQKLKERLGYLGVYYKRDTAFFFRRMSPADKRKLLDELRSIYRTIVLEYFNTDAKVNERIDEFVSKAFFADISVSQVLEIHVELMDTFSKQLKLEGRSEDILLDYRLTLIDVIAHLCEMYRRSIPREV.

Positions 3–133 (QSTALTICGL…VKLCPGCAVP (131 aa)) are psR domain, binds oxidized quinones. One can recognise a KaiA N-terminal domain in the interval 3–163 (QSTALTICGL…RLSQKLKERL (161 aa)). The tract at residues 164 to 172 (GYLGVYYKR) is flexible linker. One can recognise a KaiA C-terminal domain in the interval 173–281 (DTAFFFRRMS…CEMYRRSIPR (109 aa)).

As to quaternary structure, homodimer. The KaiABC complex composition changes during the circadian cycle to control KaiC phosphorylation. Complexes KaiC(6), KaiA(2-4):KaiC(6), KaiB(6):KaiC(6) and KaiC(6):KaiB(6):KaiA(12) are among the most important forms, many form cooperatively. KaiA and CikA bind to the same region of the KaiB(fs) form and therefore compete.

In terms of biological role, key component of the KaiABC oscillator complex, which constitutes the main circadian regulator in cyanobacteria. Complex composition changes during the circadian cycle to control KaiC phosphorylation. KaiA stimulates KaiC autophosphorylation, while KaiB sequesters KaiA, leading to KaiC autodephosphorylation. KaiA binding to the KaiC CII domain during the subjective day yields KaiA(2-4):KaiC(6) complexes which stimulate KaiC autophosphorylation. Phospho-Ser-431 KaiC accumulation triggers binding of KaiB during the subjective night to form the KaiB(6):KaiC(6) complex, leading to changes in the output regulators CikA and SasA. KaiB(6):KaiC(6) formation exposes a site for KaiA binding on KaiB that sequesters KaiA from KaiC's CII domain, making the KaiC(6):KaiB(6):KaiA(12) complex resulting in KaiC autodephosphorylation. Complete dephosphorylation of KaiC leads to dissociation of KaiA(2):KaiB(1), completing 1 cycle of the Kai oscillator. Functionally, binds oxidized quinones via the N-terminal PsR domain, allowing it to sense redox changes and possibly mediate clock input. This is Circadian clock oscillator protein KaiA from Thermostichus vulcanus (Synechococcus vulcanus).